A 1137-amino-acid chain; its full sequence is DENN domain-containing protein 2B (1137 aa).

Positions 1 to 12 (MTMTANKNSSIT) are enriched in polar residues. The segment at 1–99 (MTMTANKNSS…PTCPFKTASF (99 aa)) is disordered. Ser-30 and Ser-32 each carry phosphoserine. Over residues 32–43 (SPPPVLSPPRSP) the composition is skewed to pro residues. The span at 49 to 64 (DSETSACRYPSHSSSR) shows a compositional bias: polar residues. Over residues 73–92 (PAPSPQNPQDPSPDTSPPTC) the composition is skewed to pro residues. At Thr-231 the chain carries Phosphothreonine. Ser-233 is subject to Phosphoserine. Positions 293–573 (KEQPGRGLPQ…HRLPRLPKRH (281 aa)) are disordered. Positions 324 to 348 (EEPAGGASVSAGSRAVGVAGVAGEA) are enriched in low complexity. Thr-364 carries the phosphothreonine modification. Ser-368 is subject to Phosphoserine. Low complexity predominate over residues 368–380 (SPSSQRLPSKSSL). The segment covering 392-402 (RTFEYEADKNP) has biased composition (basic and acidic residues). Positions 401–447 (NPKSKPSNGLPPSPTPAAPPPLPSTPAPPVTRRPKKDMRGHRKSQSR) are interaction with ABL1. Residues 409-431 (GLPPSPTPAAPPPLPSTPAPPVT) show a composition bias toward pro residues. Basic residues predominate over residues 432–446 (RRPKKDMRGHRKSQS). Over residues 456–481 (SSLQSLYPSSPTENGTENQPKFGSKS) the composition is skewed to polar residues. Thr-482 bears the Phosphothreonine mark. Over residues 495–508 (LPKENPYEDVDLKS) the composition is skewed to basic and acidic residues. 2 stretches are compositionally biased toward polar residues: residues 514–524 (KSQQLSENSLD) and 539–558 (SPPT…SGNW). Residue Ser-545 is modified to Phosphoserine. Basic residues predominate over residues 562–573 (KSHRLPRLPKRH). Phosphoserine is present on residues Ser-574 and Ser-622. The tract at residues 641–661 (IETASLRDENSESESDSDDRF) is disordered. In terms of domain architecture, uDENN spans 698 to 846 (EYFVVVSLKK…PFPAPGKTIK (149 aa)). Residues 868–1001 (RLEHVDFECL…LQAALEQALE (134 aa)) enclose the cDENN domain. Residues 1003 to 1096 (KNELISQDSD…QDRELRKCRA (94 aa)) form the dDENN domain.

As to quaternary structure, interacts with ITSN1 and GRB2. Isoform 1 interacts with the SH3 domain of ABL1. Post-translationally, phosphorylated. Phosphorylation decreases ITSN1 binding. As to expression, widely expressed with the exception of peripheral blood lymphocytes. Isoform 1 is expressed in several epithelial and fibroblast (including tumorigenic) but absent in lymphoid cell lines (at protein level). Isoform 3 is expressed in primary cell or weakly tumorigenic but not in tumorigenic cell lines (at protein level).

It localises to the cytoplasm. The protein resides in the cell cortex. Its subcellular location is the cell membrane. It is found in the recycling endosome. Its function is as follows. May be involved in cytoskeletal organization and tumorogenicity. Seems to be involved in a signaling transduction pathway leading to activation of MAPK1/ERK2. Plays a role in EGFR trafficking from recycling endosomes back to the cell membrane. Guanine nucleotide exchange factor (GEF) which may activate RAB9A and RAB9B. Promotes the exchange of GDP to GTP, converting inactive GDP-bound Rab proteins into their active GTP-bound form. Functionally, may block ERK2 activation stimulated by ABL1. May alter cell morphology and cell growth. The chain is DENN domain-containing protein 2B from Homo sapiens (Human).